Here is a 52-residue protein sequence, read N- to C-terminus: MVEERKLYICMRCGRTFSRSEMEILPGIRCPYCNFKIIMKVRSPTVKRIPAV.

3 residues coordinate Zn(2+): C13, C30, and C33.

This sequence belongs to the archaeal Rpo12/eukaryotic RPC10 RNA polymerase subunit family. Part of the RNA polymerase complex. Zn(2+) serves as cofactor.

Its subcellular location is the cytoplasm. The catalysed reaction is RNA(n) + a ribonucleoside 5'-triphosphate = RNA(n+1) + diphosphate. DNA-dependent RNA polymerase (RNAP) catalyzes the transcription of DNA into RNA using the four ribonucleoside triphosphates as substrates. In Pyrobaculum arsenaticum (strain DSM 13514 / JCM 11321 / PZ6), this protein is DNA-directed RNA polymerase subunit Rpo12.